Here is an 87-residue protein sequence, read N- to C-terminus: Sec-independent protein translocase protein TatA (87 aa).

The helical transmembrane segment at 1–21 (MGGMSITHWIVVAVVVMIFFG) threads the bilayer. A disordered region spans residues 40-87 (KKGMSEDDTTPPAAPPAPAPRLENQPLPPENTTQNVAQNVPNDIKNNQ). Residues 69–87 (ENTTQNVAQNVPNDIKNNQ) show a composition bias toward polar residues.

It belongs to the TatA/E family. In terms of assembly, the Tat system comprises two distinct complexes: a TatABC complex, containing multiple copies of TatA, TatB and TatC subunits, and a separate TatA complex, containing only TatA subunits. Substrates initially bind to the TatABC complex, which probably triggers association of the separate TatA complex to form the active translocon.

Its subcellular location is the cell inner membrane. Functionally, part of the twin-arginine translocation (Tat) system that transports large folded proteins containing a characteristic twin-arginine motif in their signal peptide across membranes. TatA could form the protein-conducting channel of the Tat system. This Zymomonas mobilis subsp. mobilis (strain ATCC 31821 / ZM4 / CP4) protein is Sec-independent protein translocase protein TatA.